The chain runs to 423 residues: MVFSNNDEGLINKKLPKELLLRIFSFLDIVTLCRCAQISKAWNILALDGSNWQRIDLFNFQTDVEGRVVENISKRCGGFLRKLSLRGCIGVGDSSLKTFAQNCRNIEHLNLNGCTKITDSTCYSLSRFCSKLKHLDLTSCVSITNSSLKGISEGCRNLEYLNLSWCDQITKDGIEALVRGCRGLKALLLRGCTQLEDEALKHIQNYCHELVSLNLQSCSRITDEGVVQICRGCHRLQALCLSGCSNLTDASLTALGLNCPRLQILEAARCSHLTDAGFTLLARNCHELEKMDLEECILITDSTLIQLSIHCPKLQALSLSHCELITDDGILHLSNSTCGHERLRVLELDNCLLITDVALEHLENCRGLERLELYDCQQVTRAGIKRMRAQLPHVKVHAYFAPVTPPTAVAGSGQRLCRCCVIL.

One can recognise an F-box domain in the interval 9–55 (GLINKKLPKELLLRIFSFLDIVTLCRCAQISKAWNILALDGSNWQRI). LRR repeat units lie at residues 61 to 87 (QTDV…SLRG), 88 to 113 (CIGV…NLNG), 114 to 139 (CTKI…DLTS), 140 to 165 (CVSI…NLSW), 166 to 191 (CDQI…LLRG), 192 to 217 (CTQL…NLQS), 218 to 243 (CSRI…CLSG), 244 to 269 (CSNL…EAAR), 270 to 295 (CSHL…DLEE), 296 to 321 (CILI…SLSH), 322 to 350 (CELI…ELDN), 351 to 375 (CLLI…ELYD), and 376 to 401 (CQQV…AYFA). The interaction with Calmodulin stretch occupies residues 80-90 (LRKLSLRGCIG). A Glycyl lysine isopeptide (Lys-Gly) (interchain with G-Cter in ubiquitin) cross-link involves residue Lys-201. A Phosphothreonine modification is found at Thr-404. Cys-420 carries the S-geranylgeranyl cysteine lipid modification. Positions 420–423 (CVIL) match the CAAX motif motif.

As to quaternary structure, part of the SCF (SKP1-CUL1-F-box) E3 ubiquitin-protein ligase complex SCF(FBXL2) composed of CUL1, SKP1, RBX1 and FBXL2. Interacts with calmodulin; may antagonize substrate ubiquitination by SCF(FBXL2). May interact with PIK3R1. Interacts with PTPN13. (Microbial infection) Interacts with hepatitis C virus non-structural protein 5A (NS5A) and less efficiently, with hepatitis C virus non-structural protein 5B (NS5B); a reaction crucial for hepatitis C virus RNA replication. Phosphorylated by GSK-beta (GSK3B), promoting recognition by FBXO3, leading to its ubiquitination by the SCF(FBXO3) complex. In terms of processing, ubiquitinated at Lys-201 by the SCF(FBXO3) complex in response to lipopolysaccharide (LPS), leading to its degradation by the proteasome. Expressed in brain, heart, kidney, liver, lung, pancreas and placenta.

It is found in the membrane. Its pathway is protein modification; protein ubiquitination. Its function is as follows. Calcium-activated substrate recognition component of the SCF (SKP1-cullin-F-box protein) E3 ubiquitin-protein ligase complex, SCF(FBXL2), which mediates the ubiquitination and subsequent proteasomal degradation of target proteins. Unlike many F-box proteins, FBXL2 does not seem to target phosphodegron within its substrates but rather calmodulin-binding motifs and is thereby antagonized by calmodulin. This is the case for the cyclins CCND2 and CCND3 which polyubiquitination and subsequent degradation are inhibited by calmodulin. Through CCND2 and CCND3 degradation induces cell-cycle arrest in G(0). SCF(FBXL2) also mediates PIK3R2 ubiquitination and proteasomal degradation thereby regulating phosphatidylinositol 3-kinase signaling and autophagy. PCYT1A monoubiquitination by SCF(FBXL2) and subsequent degradation regulates synthesis of phosphatidylcholine, which is utilized for formation of membranes and of pulmonary surfactant. The SCF(FBXL2) complex acts as a regulator of inflammation by mediating ubiquitination and degradation of TRAF proteins (TRAF1, TRAF2, TRAF3, TRAF4, TRAF5 and TRAF6). The SCF(FBXL2) complex acts as a negative regulator of the NLRP3 inflammasome by mediating ubiquitination and degradation of NLRP3. This Homo sapiens (Human) protein is F-box/LRR-repeat protein 2.